Consider the following 3011-residue polypeptide: Chromodomain-helicase-DNA-binding protein 7 (3011 aa).

Disordered regions lie at residues 90–146, 159–189, 202–422, 502–806, and 941–960; these read ISNA…SMWG, PYQQQQQQPQPTQPPQAPSGPPGQGHPQHMQ, MQQH…GSAG, QQLP…VEKI, and PEMERVERPPADDWKKSESS. Residues 159 to 168 show a composition bias toward low complexity; sequence PYQQQQQQPQ. Pro residues predominate over residues 169-179; it reads PTQPPQAPSGP. Low complexity predominate over residues 203–215; it reads QQHGQPQQQRMNQ. Composition is skewed to polar residues over residues 216–227, 241–258, 291–347, and 374–393; these read FSQGQEGLNQGN, VPQQNPSMAPSLRHSVQQ, QTLN…NQSV, and GSLNQMNTQTMHPSQPQGTY. Over residues 502 to 516 the composition is skewed to low complexity; the sequence is QQLPSQQQSFQQQMP. 2 stretches are compositionally biased toward polar residues: residues 576-586 and 630-641; these read TQVSGPNTQLV and DSQNLSRNSVDC. Composition is skewed to basic and acidic residues over residues 655 to 684 and 718 to 730; these read KKEPKDPKEPKEKKEPKTPKVPKTPKEPKE and KGKEGSENSDLDK. The span at 747–759 shows a compositional bias: basic residues; it reads QKRRSSRQVKRKR. Residues 760–770 show a composition bias toward basic and acidic residues; that stretch reads YTEDLEFKISD. The segment covering 783-795 has biased composition (polar residues); the sequence is SPSNTSQSEQQES. 2 consecutive Chromo domains span residues 801–868 and 883–948; these read PVVE…GQNK and VEID…RVER. A Helicase ATP-binding domain is found at 981–1155; that stretch reads LFNWYNTRNC…FSLLHFLEPG (175 aa). 994–1001 contacts ATP; it reads DEMGLGKT. The short motif at 1106–1109 is the DEAH box element; the sequence is DEAH. The Helicase C-terminal domain maps to 1295–1465; sequence LIDKLLPKLK…LSKKEIEDLL (171 aa). Disordered regions lie at residues 1577-1602, 1836-1869, and 2136-2291; these read FSDLESDSEEKPSTKPRRPQDKSQGY, GTDMLADGGDGGEFDREDEDPEYKPTRTPFKDEI, and GTGN…GFYM. The span at 1585–1597 shows a compositional bias: basic and acidic residues; sequence EEKPSTKPRRPQD. Acidic residues predominate over residues 1845–1856; the sequence is DGGEFDREDEDP. Over residues 1857 to 1867 the composition is skewed to basic and acidic residues; that stretch reads EYKPTRTPFKD. The segment covering 2136 to 2145 has biased composition (polar residues); sequence GTGNANTVSS. Composition is skewed to basic and acidic residues over residues 2166-2207 and 2218-2238; these read QEEK…KQDC and CELKDIEMSTDVDPKSISEKG. Over residues 2239 to 2253 the composition is skewed to acidic residues; sequence SEEDEEEKLDDDDKS. Residues 2403-2433 are a coiled coil; that stretch reads RRRRRKIEIEAERAAKRRNLMEMVAQLRESQ. The residue at position 2561 (Ser2561) is a Phosphoserine. Disordered regions lie at residues 2825–2900 and 2946–3011; these read TTGN…LPTN and GSNE…ENDE. Over residues 2841 to 2851 the composition is skewed to basic and acidic residues; sequence GASKAEEKKNE. Polar residues predominate over residues 2864-2877; the sequence is DTVSATDSANGSVS. Residues 2878 to 2893 show a composition bias toward low complexity; the sequence is AATAATTATATTTTTT. Basic and acidic residues predominate over residues 2948 to 2964; it reads NEEKATDKTEGTAFKDE. Acidic residues-rich tracts occupy residues 2965–2974 and 2984–3011; these read ENLEGSDAEE and ILEDEIAQGEELDSLDGGEEIENNENDE.

It belongs to the SNF2/RAD54 helicase family. Expressed in the neural epithelium, otic placodes, optic placodes, branchial arches, and the olfactory placodes,.

The protein localises to the nucleus. The enzyme catalyses ATP + H2O = ADP + phosphate + H(+). Functionally, ATP-dependent chromatin-remodeling factor, slides nucleosomes along DNA; nucleosome sliding requires ATP.Probable transcription regulator. Maybe involved in the in 45S precursor rRNA production. The protein is Chromodomain-helicase-DNA-binding protein 7 (CHD7) of Gallus gallus (Chicken).